Here is a 191-residue protein sequence, read N- to C-terminus: UMP-CMP kinase 2 (191 aa).

12–17 (GSGKGT) is a binding site for ATP. Residues 32-62 (SAGDLLRAERQREGSEFGALIESHIKNGSIV) are NMP. A ribonucleoside 5'-phosphate is bound by residues Arg-38, 60–62 (SIV), and 88–91 (GFPR). CMP is bound at residue Asn-95. The segment at 128 to 136 (NRGQGRTDD) is LID. Arg-129 contacts ATP. Arg-133 and Arg-144 together coordinate a ribonucleoside 5'-phosphate. Arg-172 contacts ATP.

This sequence belongs to the adenylate kinase family. UMP-CMP kinase subfamily. As to quaternary structure, monomer. The cofactor is Mg(2+). As to expression, expressed in neurons and the pharynx.

Its subcellular location is the cytoplasm. It is found in the nucleus. It catalyses the reaction CMP + ATP = CDP + ADP. The enzyme catalyses dCMP + ATP = dCDP + ADP. The catalysed reaction is UMP + ATP = UDP + ADP. In terms of biological role, catalyzes the phosphorylation of pyrimidine nucleoside monophosphates at the expense of ATP. Plays an important role in de novo pyrimidine nucleotide biosynthesis. Has preference for UMP and CMP as phosphate acceptors. The polypeptide is UMP-CMP kinase 2 (Caenorhabditis elegans).